The sequence spans 89 residues: Large ribosomal subunit protein bL31B (89 aa).

The protein belongs to the bacterial ribosomal protein bL31 family. Type B subfamily. As to quaternary structure, part of the 50S ribosomal subunit.

In Enterococcus faecalis (strain ATCC 700802 / V583), this protein is Large ribosomal subunit protein bL31B.